Reading from the N-terminus, the 181-residue chain is Bradykinin-potentiating and C-type natriuretic peptides (181 aa).

The first 23 residues, 1–23 (MFVSRLAASGLLLLALLAVSLDG), serve as a signal peptide directing secretion. The propeptide occupies 24–30 (KPLQQWS). Position 31 is a pyrrolidone carboxylic acid (glutamine 31). A propeptide spanning residues 41–43 (LVV) is cleaved from the precursor. Glutamine 44 carries the pyrrolidone carboxylic acid modification. 2 propeptides span residues 50 to 78 (TQLQ…AALD) and 90 to 157 (GSKA…KGLA). The tract at residues 74-153 (EAALDTPPAG…GGGGGGARRL (80 aa)) is disordered. Residues 104–114 (SKGASATSAAS) show a composition bias toward low complexity. The segment covering 140-150 (AGGGGGGGGGA) has biased composition (gly residues). An intrachain disulfide couples cysteine 165 to cysteine 181.

The protein in the N-terminal section; belongs to the bradykinin-potentiating peptide family. This sequence in the C-terminal section; belongs to the natriuretic peptide family. In terms of tissue distribution, venom gland.

Its subcellular location is the secreted. Functionally, bradykinin-potentiating peptide both inhibits the activity of the angiotensin-converting enzyme (ACE) and enhances the action of bradykinin by inhibiting the peptidases that inactivate it. It acts as an indirect hypotensive agent. Its function is as follows. antagonizes the vasodilatory actions of bradykinin at the B2 bradykinin receptor. Has no demonstrable hypotensive activity when injected intravenously in rats. Has a vasorelaxant activity in rat aortic strips and a diuretic potency in anesthetized rats. May act by activating natriuretic receptors (NPR1 and/or NPR2). This chain is Bradykinin-potentiating and C-type natriuretic peptides, found in Crotalus durissus collilineatus (Brazilian rattlesnake).